We begin with the raw amino-acid sequence, 356 residues long: 3-isopropylmalate dehydrogenase (356 aa).

Substrate-binding residues include Arg-90, Arg-100, Arg-128, and Asp-222. Mg(2+)-binding residues include Asp-222, Asp-246, and Asp-250. Position 280-292 (280-292 (GSAPDIAGKGVAN)) interacts with NAD(+).

This sequence belongs to the isocitrate and isopropylmalate dehydrogenases family. LeuB type 1 subfamily. Homodimer. The cofactor is Mg(2+). It depends on Mn(2+) as a cofactor.

The protein resides in the cytoplasm. It carries out the reaction (2R,3S)-3-isopropylmalate + NAD(+) = 4-methyl-2-oxopentanoate + CO2 + NADH. The protein operates within amino-acid biosynthesis; L-leucine biosynthesis; L-leucine from 3-methyl-2-oxobutanoate: step 3/4. In terms of biological role, catalyzes the oxidation of 3-carboxy-2-hydroxy-4-methylpentanoate (3-isopropylmalate) to 3-carboxy-4-methyl-2-oxopentanoate. The product decarboxylates to 4-methyl-2 oxopentanoate. The sequence is that of 3-isopropylmalate dehydrogenase from Albidiferax ferrireducens (strain ATCC BAA-621 / DSM 15236 / T118) (Rhodoferax ferrireducens).